Consider the following 162-residue polypeptide: Small ribosomal subunit protein bS16 (162 aa).

A disordered region spans residues 113–162 (ADGGPTTEATKPKKKSPAKKAAKAAEPAPQPEQPDTPALGGEQAELTAES). The span at 124–134 (PKKKSPAKKAA) shows a compositional bias: basic residues.

This sequence belongs to the bacterial ribosomal protein bS16 family.

This is Small ribosomal subunit protein bS16 from Mycobacterium tuberculosis (strain ATCC 25177 / H37Ra).